We begin with the raw amino-acid sequence, 692 residues long: UvrABC system protein B (692 aa).

Positions glutamate 32–phenylalanine 187 constitute a Helicase ATP-binding domain. Glycine 45–threonine 52 contacts ATP. A Beta-hairpin motif is present at residues tyrosine 98–valine 121. The region spanning glutamine 436 to isoleucine 631 is the Helicase C-terminal domain. One can recognise a UVR domain in the interval lysine 656–methionine 691.

This sequence belongs to the UvrB family. Forms a heterotetramer with UvrA during the search for lesions. Interacts with UvrC in an incision complex.

The protein resides in the cytoplasm. Its function is as follows. The UvrABC repair system catalyzes the recognition and processing of DNA lesions. A damage recognition complex composed of 2 UvrA and 2 UvrB subunits scans DNA for abnormalities. Upon binding of the UvrA(2)B(2) complex to a putative damaged site, the DNA wraps around one UvrB monomer. DNA wrap is dependent on ATP binding by UvrB and probably causes local melting of the DNA helix, facilitating insertion of UvrB beta-hairpin between the DNA strands. Then UvrB probes one DNA strand for the presence of a lesion. If a lesion is found the UvrA subunits dissociate and the UvrB-DNA preincision complex is formed. This complex is subsequently bound by UvrC and the second UvrB is released. If no lesion is found, the DNA wraps around the other UvrB subunit that will check the other stand for damage. This Lactococcus lactis subsp. cremoris (strain SK11) protein is UvrABC system protein B.